The primary structure comprises 122 residues: Small ribosomal subunit protein bS6 (122 aa).

The protein belongs to the bacterial ribosomal protein bS6 family.

Binds together with bS18 to 16S ribosomal RNA. This Trichlorobacter lovleyi (strain ATCC BAA-1151 / DSM 17278 / SZ) (Geobacter lovleyi) protein is Small ribosomal subunit protein bS6.